A 54-amino-acid chain; its full sequence is Large ribosomal subunit protein bL32 (54 aa).

Residues 1 to 54 (MAVQQNRKTRSRRGMRRSHDALTAAQLSVDSTSGETHRRHHVTADGYYRGKKVI) are disordered. Over residues 7–16 (RKTRSRRGMR) the composition is skewed to basic residues. Polar residues predominate over residues 25-34 (AQLSVDSTSG).

It belongs to the bacterial ribosomal protein bL32 family.

This chain is Large ribosomal subunit protein bL32, found in Tolumonas auensis (strain DSM 9187 / NBRC 110442 / TA 4).